A 407-amino-acid polypeptide reads, in one-letter code: Imidazolonepropionase (407 aa).

The Fe(3+) site is built by His73 and His75. Residues His73 and His75 each coordinate Zn(2+). The 4-imidazolone-5-propanoate site is built by Arg82, Tyr145, and His178. Position 145 (Tyr145) interacts with N-formimidoyl-L-glutamate. A Fe(3+)-binding site is contributed by His243. His243 lines the Zn(2+) pocket. Gln246 lines the 4-imidazolone-5-propanoate pocket. Asp318 is a binding site for Fe(3+). Residue Asp318 participates in Zn(2+) binding. N-formimidoyl-L-glutamate contacts are provided by Asn320 and Gly322. Thr323 provides a ligand contact to 4-imidazolone-5-propanoate.

Belongs to the metallo-dependent hydrolases superfamily. HutI family. Zn(2+) is required as a cofactor. The cofactor is Fe(3+).

It is found in the cytoplasm. The catalysed reaction is 4-imidazolone-5-propanoate + H2O = N-formimidoyl-L-glutamate. The protein operates within amino-acid degradation; L-histidine degradation into L-glutamate; N-formimidoyl-L-glutamate from L-histidine: step 3/3. Catalyzes the hydrolytic cleavage of the carbon-nitrogen bond in imidazolone-5-propanoate to yield N-formimidoyl-L-glutamate. It is the third step in the universal histidine degradation pathway. The polypeptide is Imidazolonepropionase (Serratia proteamaculans (strain 568)).